The sequence spans 197 residues: Large ribosomal subunit protein bL25 (197 aa).

The protein belongs to the bacterial ribosomal protein bL25 family. CTC subfamily. As to quaternary structure, part of the 50S ribosomal subunit; part of the 5S rRNA/L5/L18/L25 subcomplex. Contacts the 5S rRNA. Binds to the 5S rRNA independently of L5 and L18.

Its function is as follows. This is one of the proteins that binds to the 5S RNA in the ribosome where it forms part of the central protuberance. This is Large ribosomal subunit protein bL25 from Pseudomonas putida (strain GB-1).